Consider the following 388-residue polypeptide: Transcription factor SOX-7 (388 aa).

2 disordered regions span residues 20-46 (DAEL…SRIR) and 140-197 (RDQN…VDTY). 2 stretches are compositionally biased toward basic and acidic residues: residues 36-45 (PGDKGSESRI) and 146-164 (PEKR…DRGE). Residues 45-113 (IRRPMNAFMV…QHMQDYPNYK (69 aa)) constitute a DNA-binding region (HMG box). One can recognise a Sox C-terminal domain in the interval 268-388 (VSMMSPVPGC…ATYYNSYSVS (121 aa)).

In terms of assembly, interacts with CTNNB1/beta-catenin; this interaction may lead to the proteasomal degradation of active CTNNB1 and thus inhibition of Wnt/beta-catenin-stimulated transcription. As to expression, widely expressed in adult and fetal tissues. Present both in mesenchymal and epithelial cells in some adult tissues, including colon. Tends to be down-regulated in prostate adenocarcinomas and colorectal tumors due to promoter hypermethylation.

Its subcellular location is the nucleus. The protein resides in the cytoplasm. Its function is as follows. Binds to and activates the CDH5 promoter, hence plays a role in the transcriptional regulation of genes expressed in the hemogenic endothelium and blocks further differentiation into blood precursors. May be required for the survival of both hematopoietic and endothelial precursors during specification. Competes with GATA4 for binding and activation of the FGF3 promoter. Represses Wnt/beta-catenin-stimulated transcription, probably by targeting CTNNB1 to proteasomal degradation. Binds the DNA sequence 5'-AACAAT-3'. The protein is Transcription factor SOX-7 (SOX7) of Homo sapiens (Human).